The primary structure comprises 436 residues: Kynureninase (436 aa).

Pyridoxal 5'-phosphate is bound by residues leucine 88, threonine 89, 116–119, aspartate 202, histidine 205, and tyrosine 227; that span reads FPSD. The residue at position 228 (lysine 228) is an N6-(pyridoxal phosphate)lysine. Positions 280 and 308 each coordinate pyridoxal 5'-phosphate.

It belongs to the kynureninase family. In terms of assembly, homodimer. The cofactor is pyridoxal 5'-phosphate.

The protein resides in the cytoplasm. It catalyses the reaction L-kynurenine + H2O = anthranilate + L-alanine + H(+). It carries out the reaction 3-hydroxy-L-kynurenine + H2O = 3-hydroxyanthranilate + L-alanine + H(+). It functions in the pathway amino-acid degradation; L-kynurenine degradation; L-alanine and anthranilate from L-kynurenine: step 1/1. The protein operates within cofactor biosynthesis; NAD(+) biosynthesis; quinolinate from L-kynurenine: step 2/3. Catalyzes the cleavage of L-kynurenine (L-Kyn) and L-3-hydroxykynurenine (L-3OHKyn) into anthranilic acid (AA) and 3-hydroxyanthranilic acid (3-OHAA), respectively. In Schistosoma japonicum (Blood fluke), this protein is Kynureninase.